Consider the following 437-residue polypeptide: UDP-glucose 6-dehydrogenase (437 aa).

6 residues coordinate NAD(+): Val-11, Asp-30, Lys-35, Thr-86, Thr-122, and Glu-155. Substrate is bound by residues 151-155 (EFLRE), Lys-209, Asn-213, 254-258 (FLHAG), and Gly-262. Cys-265 (nucleophile) is an active-site residue. Lys-268 provides a ligand contact to NAD(+). Residue Lys-326 participates in substrate binding. Arg-333 serves as a coordination point for NAD(+).

It belongs to the UDP-glucose/GDP-mannose dehydrogenase family.

It catalyses the reaction UDP-alpha-D-glucose + 2 NAD(+) + H2O = UDP-alpha-D-glucuronate + 2 NADH + 3 H(+). Its pathway is nucleotide-sugar biosynthesis; UDP-alpha-D-glucuronate biosynthesis; UDP-alpha-D-glucuronate from UDP-alpha-D-glucose: step 1/1. It functions in the pathway capsule biogenesis; capsule polysaccharide biosynthesis. The protein is UDP-glucose 6-dehydrogenase of Rhizobium meliloti (strain 1021) (Ensifer meliloti).